The following is a 125-amino-acid chain: Holo-[acyl-carrier-protein] synthase (125 aa).

D8 and E57 together coordinate Mg(2+).

Belongs to the P-Pant transferase superfamily. AcpS family. Mg(2+) is required as a cofactor.

It localises to the cytoplasm. It catalyses the reaction apo-[ACP] + CoA = holo-[ACP] + adenosine 3',5'-bisphosphate + H(+). Transfers the 4'-phosphopantetheine moiety from coenzyme A to a Ser of acyl-carrier-protein. This Halothermothrix orenii (strain H 168 / OCM 544 / DSM 9562) protein is Holo-[acyl-carrier-protein] synthase.